The primary structure comprises 475 residues: Glycogen synthase (475 aa).

Residue Lys-15 participates in ADP-alpha-D-glucose binding.

It belongs to the glycosyltransferase 1 family. Bacterial/plant glycogen synthase subfamily.

It catalyses the reaction [(1-&gt;4)-alpha-D-glucosyl](n) + ADP-alpha-D-glucose = [(1-&gt;4)-alpha-D-glucosyl](n+1) + ADP + H(+). The protein operates within glycan biosynthesis; glycogen biosynthesis. Synthesizes alpha-1,4-glucan chains using ADP-glucose. The sequence is that of Glycogen synthase from Anaeromyxobacter sp. (strain K).